The sequence spans 1005 residues: Beta-galactosidase (1005 aa).

Catalysis depends on glutamate 455, which acts as the Proton donor. Glutamate 526 serves as the catalytic Nucleophile.

Belongs to the glycosyl hydrolase 2 family.

It catalyses the reaction Hydrolysis of terminal non-reducing beta-D-galactose residues in beta-D-galactosides.. The polypeptide is Beta-galactosidase (lacZ) (Actinobacillus pleuropneumoniae (Haemophilus pleuropneumoniae)).